The following is a 329-amino-acid chain: Ephrin-B1 (329 aa).

The first 20 residues, 1–20 (MEGLRRLLGLLLVLYRLCSA), serve as a signal peptide directing secretion. The Extracellular segment spans residues 21–226 (LGKNLEPVTW…FFNSKIAVFA (206 aa)). The region spanning 23-157 (KNLEPVTWNS…TRSMKIIMKV (135 aa)) is the Ephrin RBD domain. Disulfide bonds link Cys-57–Cys-94 and Cys-82–Cys-146. A glycan (N-linked (GlcNAc...) asparagine) is linked at Asn-132. Positions 163–192 (AVPPEQLTTTRPSKEADNTGKIATFGPWNG) are disordered. Asn-203 carries N-linked (GlcNAc...) asparagine glycosylation. The chain crosses the membrane as a helical span at residues 227–247 (AIGAGCVIFILIIIFLVVLLI). The Cytoplasmic segment spans residues 248–329 (KIRKRHRKHT…QSPANIYYKV (82 aa)). The PDZ-binding signature appears at 327–329 (YKV).

Belongs to the ephrin family. Interacts with TLE4 through the PDZ-binding motif. Inducible phosphorylation of tyrosine residues in the cytoplasmic domain. Tyrosine phosphorylation inhibits TLE4-binding. In terms of tissue distribution, expressed at low levels in most tissues with highest levels in the kidney, oocytes, ovary and testis.

The protein resides in the membrane. In terms of biological role, cell surface transmembrane ligand for Eph receptors, a family of receptor tyrosine kinases which are crucial for migration, repulsion and adhesion during neuronal, vascular and epithelial development. Binds promiscuously Eph receptors residing on adjacent cells, leading to contact-dependent bidirectional signaling into neighboring cells. The signaling pathway downstream of the receptor is referred to as forward signaling while the signaling pathway downstream of the ephrin ligand is referred to as reverse signaling. May have a role in the developing mesenchymal and nervous tissue. The protein is Ephrin-B1 (efnb1) of Xenopus laevis (African clawed frog).